The chain runs to 134 residues: Transmembrane protein 100 (134 aa).

A disordered region spans residues 1–24 (MTEEPTKENLGGPKSPTPVTMEKS). A Phosphoserine modification is found at Ser-15. 2 helical membrane passes run 56–76 (CIIP…AVAY) and 84–104 (VISI…ASSA). Phosphoserine is present on Ser-121.

Interacts (via C-terminus) with TRPA1 and TRPV1. Interacts with TASOR.

Its subcellular location is the cell membrane. It is found in the membrane. The protein localises to the perikaryon. It localises to the cytoplasm. The protein resides in the perinuclear region. Its subcellular location is the endoplasmic reticulum. In terms of biological role, plays a role during embryonic arterial endothelium differentiation and vascular morphogenesis through the ACVRL1 receptor-dependent signaling pathway upon stimulation by bone morphogenetic proteins, such as GDF2/BMP9 and BMP10. Involved in the regulation of nociception, acting as a modulator of the interaction between TRPA1 and TRPV1, two molecular sensors and mediators of pain signals in dorsal root ganglia (DRG) neurons. Mechanistically, it weakens their interaction, thereby releasing the inhibition of TRPA1 by TRPV1 and increasing the single-channel open probability of the TRPA1-TRPV1 complex. This is Transmembrane protein 100 (Tmem100) from Rattus norvegicus (Rat).